The sequence spans 45 residues: Large ribosomal subunit protein bL34 (45 aa).

Residues 1-45 (MTKRTLGGTSRKRKRVSGFRVRMRSHTGRRVIRTRRKRGRSRLAV) are disordered. The span at 10 to 45 (SRKRKRVSGFRVRMRSHTGRRVIRTRRKRGRSRLAV) shows a compositional bias: basic residues.

It belongs to the bacterial ribosomal protein bL34 family.

The protein is Large ribosomal subunit protein bL34 of Parasynechococcus marenigrum (strain WH8102).